A 69-amino-acid chain; its full sequence is MAQELSEKELLKMEVEQLKKEVKNPRALISKTGKEIKDYVEAEAGNDPLLKGIPEDKNPFKEKGGCMIS.

The disordered stretch occupies residues 47–69; sequence DPLLKGIPEDKNPFKEKGGCMIS. Positions 53–69 are enriched in basic and acidic residues; sequence IPEDKNPFKEKGGCMIS. Cys-66 is modified (cysteine methyl ester). Cys-66 is lipidated: S-farnesyl cysteine. Residues 67–69 constitute a propeptide, removed in mature form; that stretch reads MIS.

This sequence belongs to the G protein gamma family. In terms of assembly, g proteins are composed of 3 units, alpha, beta and gamma.

The protein resides in the cell membrane. Guanine nucleotide-binding proteins (G proteins) are involved as a modulator or transducer in various transmembrane signaling systems. The beta and gamma chains are required for the GTPase activity, for replacement of GDP by GTP, and for G protein-effector interaction. This chain is Guanine nucleotide-binding protein G(I)/G(S)/G(O) subunit gamma-T2 (GNGT2), found in Canis lupus familiaris (Dog).